We begin with the raw amino-acid sequence, 489 residues long: Neuropeptide CCHamide-2 receptor (489 aa).

Residues Met-1–Val-74 lie on the Extracellular side of the membrane. N-linked (GlcNAc...) asparagine glycosylation is found at Asn-25 and Asn-50. The chain crosses the membrane as a helical span at residues Leu-75–Phe-95. The Cytoplasmic segment spans residues Arg-96–Tyr-107. A helical transmembrane segment spans residues Ile-108–Ile-128. Topologically, residues Val-129 to Arg-143 are extracellular. A disulfide bridge links Cys-142 with Cys-225. A helical transmembrane segment spans residues Ile-144–Ser-164. Topologically, residues Gly-165–Thr-184 are cytoplasmic. Residues Val-185–Phe-205 traverse the membrane as a helical segment. Residues Ser-206–Lys-235 are Extracellular-facing. An N-linked (GlcNAc...) asparagine glycan is attached at Asn-219. The chain crosses the membrane as a helical span at residues Phe-236–Leu-256. The Cytoplasmic segment spans residues Tyr-257–Met-293. A helical membrane pass occupies residues Val-294–Trp-314. Residues Tyr-315–Arg-333 are Extracellular-facing. A helical membrane pass occupies residues Ile-334–Val-354. Residues Ser-355–Tyr-489 are Cytoplasmic-facing. A disordered region spans residues Ser-438–Gly-468. Positions Ala-452–Gly-468 are enriched in gly residues.

Belongs to the G-protein coupled receptor 1 family. Highly expressed in larval brain. Also highly expressed in adult brain with very low levels in larval and adult gut.

The protein localises to the cell membrane. Receptor for the neuropeptide CCHamide-2. The chain is Neuropeptide CCHamide-2 receptor from Drosophila melanogaster (Fruit fly).